A 176-amino-acid chain; its full sequence is ATP-dependent protease subunit HslV (176 aa).

Residue Thr-2 is part of the active site. 3 residues coordinate Na(+): Gly-157, Cys-160, and Thr-163.

The protein belongs to the peptidase T1B family. HslV subfamily. As to quaternary structure, a double ring-shaped homohexamer of HslV is capped on each side by a ring-shaped HslU homohexamer. The assembly of the HslU/HslV complex is dependent on binding of ATP.

The protein localises to the cytoplasm. It carries out the reaction ATP-dependent cleavage of peptide bonds with broad specificity.. Allosterically activated by HslU binding. In terms of biological role, protease subunit of a proteasome-like degradation complex believed to be a general protein degrading machinery. This Enterobacter sp. (strain 638) protein is ATP-dependent protease subunit HslV.